The chain runs to 270 residues: 2-C-methyl-D-erythritol 4-phosphate cytidylyltransferase (270 aa).

A disordered region spans residues 1–33; it reads MSDESRPSPAETPATTFAETSAETSAAGRSPAR. Positions 7-27 are enriched in low complexity; that stretch reads PSPAETPATTFAETSAETSAA.

Belongs to the IspD/TarI cytidylyltransferase family. IspD subfamily.

It carries out the reaction 2-C-methyl-D-erythritol 4-phosphate + CTP + H(+) = 4-CDP-2-C-methyl-D-erythritol + diphosphate. The protein operates within isoprenoid biosynthesis; isopentenyl diphosphate biosynthesis via DXP pathway; isopentenyl diphosphate from 1-deoxy-D-xylulose 5-phosphate: step 2/6. Catalyzes the formation of 4-diphosphocytidyl-2-C-methyl-D-erythritol from CTP and 2-C-methyl-D-erythritol 4-phosphate (MEP). The polypeptide is 2-C-methyl-D-erythritol 4-phosphate cytidylyltransferase (Streptomyces coelicolor (strain ATCC BAA-471 / A3(2) / M145)).